Reading from the N-terminus, the 628-residue chain is DNA mismatch repair protein MutL (628 aa).

The tract at residues 332 to 416 is disordered; sequence PTSAMPAPGN…ASTAPPLSEE (85 aa). Over residues 375 to 396 the composition is skewed to polar residues; that stretch reads EGSSRSDVPYPSASQVTETTDS.

Belongs to the DNA mismatch repair MutL/HexB family.

Functionally, this protein is involved in the repair of mismatches in DNA. It is required for dam-dependent methyl-directed DNA mismatch repair. May act as a 'molecular matchmaker', a protein that promotes the formation of a stable complex between two or more DNA-binding proteins in an ATP-dependent manner without itself being part of a final effector complex. The sequence is that of DNA mismatch repair protein MutL from Syntrophotalea carbinolica (strain DSM 2380 / NBRC 103641 / GraBd1) (Pelobacter carbinolicus).